A 907-amino-acid chain; its full sequence is MTIIFVDNEEYNVDKSDNLLQACLSSGINIPYFCWHPVLGSIGSCRQCAVTIYKDLEDKVGQLVMSCMTSVLDGMIVSTSDKISRNFRKGIIELLMLNHPHDCPICEEGGSCHLQDMTVMAGHTVRRYRFTKRTHKNQYLGHFITHEMNRCISCYRCVRYYKDYSGGTDLGVFGISNNVYFGRYNDGCLESEFSGNLVEVCPTGVFTDKTYSKKYSRKWDMQYAPSICQHCCVGCNISVGEKYGKISRIENRYHNAINHYFLCDLGRFSYDYSNVDERLTYSIYRSQNKTKIINDVNKTIDKLAMKFKKSSKIIGIGSCRASVESNFSLQKLVGSENFYLGISQKEYDCLMLIKDILKDNQIHVPTLREIEKSDVIFLLGEDVTKTSPLIALSIRQSIKGQVKTQDVSKNIPIWHADAVKNSFRNNKNKLFITNLMNSSLDDIADESYYASTFDQVLLGAEVYKCISNNCISNVTLLKQDLLSCAKRIATALTLSKCPLIISGSHSYNLDLIKVSFNIAKSLKVIGKNVGLILLSSNVNSIGVSLLEGISIEKVINKVLLKQIDKIIVLENDLYRYLPESIVDTLFKSSSCTVVIDHLNTRTLKQADIAIPTCNSFESSGTVVNYEGRAQRFFKTYHPNSSENKKSILESWKWLHLLYCKLHKISVFWHSLDDVIEEISLKIFSFSKLKDVAPNSSFKIFGQKLARSHHRASGRTALYSNINIHEPRPPQDNDTMFSFSMEGCQNVQNYLPYVPFSWFPGWNSVQSWNTYKKINNENYGKHLFQDTTKFVLTYYKLNCKNVNKIEDLYLIVPCYFLFCNNELAQYSPVIQENVLKNAYGIINTEDAKVLLIESGSKIEFSYLNKNFSIKVQLSKEFKKGQLGLPLGMADFPFFLAEKQVKVFRKISI.

In terms of domain architecture, 2Fe-2S ferredoxin-type spans methionine 1–isoleucine 83. Residues cysteine 34, cysteine 45, cysteine 48, and cysteine 67 each contribute to the [2Fe-2S] cluster site. The 4Fe-4S His(Cys)3-ligated-type domain maps to isoleucine 83–glycine 122. Histidine 99, cysteine 103, cysteine 106, cysteine 112, cysteine 151, cysteine 154, cysteine 157, cysteine 201, cysteine 228, cysteine 231, cysteine 235, and cysteine 263 together coordinate [4Fe-4S] cluster. The 57-residue stretch at methionine 221–glutamate 277 folds into the 4Fe-4S Mo/W bis-MGD-type domain.

The protein belongs to the complex I 75 kDa subunit family. In terms of assembly, composed of 13 different subunits. Subunits NuoCD, E, F, and G constitute the peripheral sector of the complex. Requires [2Fe-2S] cluster as cofactor. The cofactor is [4Fe-4S] cluster.

The enzyme catalyses a quinone + NADH + 5 H(+)(in) = a quinol + NAD(+) + 4 H(+)(out). Functionally, NDH-1 shuttles electrons from NADH, via FMN and iron-sulfur (Fe-S) centers, to quinones in the respiratory chain. Couples the redox reaction to proton translocation (for every two electrons transferred, four hydrogen ions are translocated across the cytoplasmic membrane), and thus conserves the redox energy in a proton gradient. The protein is NADH-quinone oxidoreductase subunit G (nuoG) of Buchnera aphidicola subsp. Baizongia pistaciae (strain Bp).